The chain runs to 372 residues: Glutamate 5-kinase (372 aa).

K9 provides a ligand contact to ATP. 3 residues coordinate substrate: S49, D136, and N148. ATP is bound by residues 168–169 and 210–216; these read TD and TGGMKSK. In terms of domain architecture, PUA spans 276-360; it reads EGKVFIDDGA…PAIEVIHRDS (85 aa).

This sequence belongs to the glutamate 5-kinase family.

The protein resides in the cytoplasm. It catalyses the reaction L-glutamate + ATP = L-glutamyl 5-phosphate + ADP. It functions in the pathway amino-acid biosynthesis; L-proline biosynthesis; L-glutamate 5-semialdehyde from L-glutamate: step 1/2. Its function is as follows. Catalyzes the transfer of a phosphate group to glutamate to form L-glutamate 5-phosphate. The protein is Glutamate 5-kinase of Oceanobacillus iheyensis (strain DSM 14371 / CIP 107618 / JCM 11309 / KCTC 3954 / HTE831).